Here is a 100-residue protein sequence, read N- to C-terminus: Large ribosomal subunit protein uL23 (100 aa).

The protein belongs to the universal ribosomal protein uL23 family. Part of the 50S ribosomal subunit. Contacts protein L29, and trigger factor when it is bound to the ribosome.

Functionally, one of the early assembly proteins it binds 23S rRNA. One of the proteins that surrounds the polypeptide exit tunnel on the outside of the ribosome. Forms the main docking site for trigger factor binding to the ribosome. The sequence is that of Large ribosomal subunit protein uL23 from Prochlorococcus marinus subsp. pastoris (strain CCMP1986 / NIES-2087 / MED4).